Consider the following 62-residue polypeptide: Conotoxin Cal12.2e (62 aa).

Residues 1–19 (MKLTCVLVVLLLVLPFGDL) form the signal peptide.

Belongs to the conotoxin O1 superfamily. Contains 4 disulfide bonds. In terms of tissue distribution, expressed by the venom duct.

It localises to the secreted. In terms of biological role, probable neurotoxin. The sequence is that of Conotoxin Cal12.2e from Californiconus californicus (California cone).